Here is a 360-residue protein sequence, read N- to C-terminus: DNA replication and repair protein RecF (360 aa).

30 to 37 provides a ligand contact to ATP; the sequence is GQNGSGKT.

The protein belongs to the RecF family.

The protein resides in the cytoplasm. Functionally, the RecF protein is involved in DNA metabolism; it is required for DNA replication and normal SOS inducibility. RecF binds preferentially to single-stranded, linear DNA. It also seems to bind ATP. The sequence is that of DNA replication and repair protein RecF from Shewanella sp. (strain W3-18-1).